The primary structure comprises 800 residues: Phenylalanine--tRNA ligase beta subunit (800 aa).

The tRNA-binding domain occupies 39-154; the sequence is TKEIKNLVVG…TEVKPGTDAL (116 aa). Residues 408-483 form the B5 domain; sequence CFVTPIDISV…RIYGYDKIPS (76 aa). Mg(2+)-binding residues include D461, D467, E470, and E471. The FDX-ACB domain occupies 708 to 800; that stretch reads PRFPGVSRDI…ALKSEGATIR (93 aa).

Belongs to the phenylalanyl-tRNA synthetase beta subunit family. Type 1 subfamily. Tetramer of two alpha and two beta subunits. The cofactor is Mg(2+).

It is found in the cytoplasm. The catalysed reaction is tRNA(Phe) + L-phenylalanine + ATP = L-phenylalanyl-tRNA(Phe) + AMP + diphosphate + H(+). This Staphylococcus saprophyticus subsp. saprophyticus (strain ATCC 15305 / DSM 20229 / NCIMB 8711 / NCTC 7292 / S-41) protein is Phenylalanine--tRNA ligase beta subunit.